A 158-amino-acid chain; its full sequence is Transcription elongation factor GreA (158 aa).

A coiled-coil region spans residues 1–26; it reads MNKVPLTEKGAQQLREELQELKTVVR.

It belongs to the GreA/GreB family.

In terms of biological role, necessary for efficient RNA polymerase transcription elongation past template-encoded arresting sites. The arresting sites in DNA have the property of trapping a certain fraction of elongating RNA polymerases that pass through, resulting in locked ternary complexes. Cleavage of the nascent transcript by cleavage factors such as GreA or GreB allows the resumption of elongation from the new 3'terminus. GreA releases sequences of 2 to 3 nucleotides. This Nitrosococcus oceani (strain ATCC 19707 / BCRC 17464 / JCM 30415 / NCIMB 11848 / C-107) protein is Transcription elongation factor GreA.